Here is a 311-residue protein sequence, read N- to C-terminus: Aspartate carbamoyltransferase catalytic subunit (311 aa).

2 residues coordinate carbamoyl phosphate: arginine 58 and threonine 59. Residue lysine 86 coordinates L-aspartate. Arginine 108, histidine 136, and glutamine 139 together coordinate carbamoyl phosphate. L-aspartate is bound by residues arginine 169 and arginine 224. Glycine 265 and proline 266 together coordinate carbamoyl phosphate.

This sequence belongs to the aspartate/ornithine carbamoyltransferase superfamily. ATCase family. In terms of assembly, heterododecamer (2C3:3R2) of six catalytic PyrB chains organized as two trimers (C3), and six regulatory PyrI chains organized as three dimers (R2).

The enzyme catalyses carbamoyl phosphate + L-aspartate = N-carbamoyl-L-aspartate + phosphate + H(+). It functions in the pathway pyrimidine metabolism; UMP biosynthesis via de novo pathway; (S)-dihydroorotate from bicarbonate: step 2/3. Its function is as follows. Catalyzes the condensation of carbamoyl phosphate and aspartate to form carbamoyl aspartate and inorganic phosphate, the committed step in the de novo pyrimidine nucleotide biosynthesis pathway. This chain is Aspartate carbamoyltransferase catalytic subunit, found in Geotalea uraniireducens (strain Rf4) (Geobacter uraniireducens).